The chain runs to 610 residues: Elongation factor 4 (610 aa).

The tr-type G domain occupies 7-189 (SRIRNFSIIA…AIVQRIPPPK (183 aa)). Residues 19-24 (DHGKST) and 136-139 (NKID) contribute to the GTP site.

Belongs to the TRAFAC class translation factor GTPase superfamily. Classic translation factor GTPase family. LepA subfamily.

The protein localises to the cell inner membrane. The enzyme catalyses GTP + H2O = GDP + phosphate + H(+). Its function is as follows. Required for accurate and efficient protein synthesis under certain stress conditions. May act as a fidelity factor of the translation reaction, by catalyzing a one-codon backward translocation of tRNAs on improperly translocated ribosomes. Back-translocation proceeds from a post-translocation (POST) complex to a pre-translocation (PRE) complex, thus giving elongation factor G a second chance to translocate the tRNAs correctly. Binds to ribosomes in a GTP-dependent manner. In Thermus thermophilus (strain ATCC 27634 / DSM 579 / HB8), this protein is Elongation factor 4.